Here is a 674-residue protein sequence, read N- to C-terminus: DNA ligase (674 aa).

Residues 36–40 (DSVYD), 85–86 (SL), and E116 each bind NAD(+). The active-site N6-AMP-lysine intermediate is the K118. Residues R139, E176, K292, and K316 each contribute to the NAD(+) site. Zn(2+) is bound by residues C410, C413, C428, and C433. In terms of domain architecture, BRCT spans 596 to 674 (PSSGNIAGKT…EADLLKFLTN (79 aa)).

The protein belongs to the NAD-dependent DNA ligase family. LigA subfamily. Mg(2+) is required as a cofactor. Mn(2+) serves as cofactor.

It catalyses the reaction NAD(+) + (deoxyribonucleotide)n-3'-hydroxyl + 5'-phospho-(deoxyribonucleotide)m = (deoxyribonucleotide)n+m + AMP + beta-nicotinamide D-nucleotide.. Its function is as follows. DNA ligase that catalyzes the formation of phosphodiester linkages between 5'-phosphoryl and 3'-hydroxyl groups in double-stranded DNA using NAD as a coenzyme and as the energy source for the reaction. It is essential for DNA replication and repair of damaged DNA. The sequence is that of DNA ligase from Rippkaea orientalis (strain PCC 8801 / RF-1) (Cyanothece sp. (strain PCC 8801)).